Here is a 239-residue protein sequence, read N- to C-terminus: MVIKAQSPAGFAEEYLIESIWNNRFPPGSILPAERELSELIGVTRTTLREVLQRLARDGWLTIRHGKPTQVNNFWETSGLNILETLARLDHDSVPQLIDNVLAVRTNIAAIFIRAAVRQHPDRVQAIVADAPTVEDSADAFADLDYRIFRALAFACGNPIYGLILNGLKGLYTRVGRYYFSNPQARRLALAFYSRLGELAASRQYDRVMDFVRSYGKESGAIWHGMQSGIPRDLADGHA.

The 69-residue stretch at 6-74 (QSPAGFAEEY…HGKPTQVNNF (69 aa)) folds into the HTH gntR-type domain. The segment at residues 34 to 53 (ERELSELIGVTRTTLREVLQ) is a DNA-binding region (H-T-H motif).

In terms of assembly, homodimer.

It is found in the cytoplasm. Its function is as follows. Multifunctional regulator of fatty acid metabolism. The sequence is that of Fatty acid metabolism regulator protein from Edwardsiella ictaluri (strain 93-146).